A 437-amino-acid chain; its full sequence is Protein disulfide-isomerase tmx3a (437 aa).

A signal peptide spans 1–21 (MANMRNIILTALLSAIALVSG). The 105-residue stretch at 22 to 126 (YVEGLDDKFT…IIEFTNRVSG (105 aa)) folds into the Thioredoxin domain. Topologically, residues 22 to 368 (YVEGLDDKFT…KNTVMSMVET (347 aa)) are extracellular. Active-site nucleophile residues include C48 and C51. A disulfide bond links C48 and C51. The N-linked (GlcNAc...) asparagine glycan is linked to N308. Residues 369 to 389 (APVFSCFVLGLPVGVVVLVIY) traverse the membrane as a helical segment. The Cytoplasmic segment spans residues 390–437 (ATCTAVPADDEKPEEEATASPALDTHGKKAIESQPESTEKTSEAKKED). The segment at 398–437 (DDEKPEEEATASPALDTHGKKAIESQPESTEKTSEAKKED) is disordered. Residues 414–437 (THGKKAIESQPESTEKTSEAKKED) show a composition bias toward basic and acidic residues. The Di-lysine motif motif lies at 434–437 (KKED).

Its subcellular location is the endoplasmic reticulum membrane. The enzyme catalyses Catalyzes the rearrangement of -S-S- bonds in proteins.. In terms of biological role, probable disulfide isomerase, which participates in the folding of proteins containing disulfide bonds. May act as a dithiol oxidase. Acts as a regulator of endoplasmic reticulum-mitochondria contact sites via its ability to regulate redox signals. This is Protein disulfide-isomerase tmx3a (tmx3a) from Danio rerio (Zebrafish).